Here is a 400-residue protein sequence, read N- to C-terminus: TBC1 domain family member 13 (400 aa).

The Rab-GAP TBC domain occupies 35–345 (PCEGGLRCLC…RIWDSLFADG (311 aa)).

In terms of assembly, interacts with RAB1A and RAB10; in a GTP-dependent manner. In terms of tissue distribution, expressed in adipocytes.

The protein localises to the membrane. It is found in the cytoplasm. Acts as a GTPase-activating protein for RAB35. Together with RAB35 may be involved in regulation of insulin-induced glucose transporter SLC2A4/GLUT4 translocation to the plasma membrane in adipocytes. In Mus musculus (Mouse), this protein is TBC1 domain family member 13 (Tbc1d13).